We begin with the raw amino-acid sequence, 587 residues long: Proteasome-associated ATPase (587 aa).

The stretch at 9 to 94 forms a coiled coil; it reads ARKAQHDAEI…KEEVDRLAQP (86 aa). 276 to 281 contributes to the ATP binding site; the sequence is GCGKTL. The interval 586-587 is docks into pockets in the proteasome alpha-ring; the sequence is YL.

It belongs to the AAA ATPase family. Homohexamer. Assembles into a hexameric ring structure that caps the 20S proteasome core. Strongly interacts with the prokaryotic ubiquitin-like protein Pup through a hydrophobic interface; the interacting region of ARC lies in its N-terminal coiled-coil domain. There is one Pup binding site per ARC hexamer ring. Upon ATP-binding, the C-terminus of ARC interacts with the alpha-rings of the proteasome core, possibly by binding to the intersubunit pockets.

Its pathway is protein degradation; proteasomal Pup-dependent pathway. Functionally, ATPase which is responsible for recognizing, binding, unfolding and translocation of pupylated proteins into the bacterial 20S proteasome core particle. May be essential for opening the gate of the 20S proteasome via an interaction with its C-terminus, thereby allowing substrate entry and access to the site of proteolysis. Thus, the C-termini of the proteasomal ATPase may function like a 'key in a lock' to induce gate opening and therefore regulate proteolysis. The polypeptide is Proteasome-associated ATPase (Thermomonospora curvata (strain ATCC 19995 / DSM 43183 / JCM 3096 / KCTC 9072 / NBRC 15933 / NCIMB 10081 / Henssen B9)).